The sequence spans 162 residues: Nascent polypeptide-associated complex subunit beta (162 aa).

Disordered regions lie at residues Met-1–Glu-39 and Glu-130–Glu-162. Over residues Thr-24–Ala-33 the composition is skewed to basic residues. In terms of domain architecture, NAC-A/B spans Ser-38–Ile-103. The segment covering Gly-146–Glu-162 has biased composition (acidic residues).

The protein belongs to the NAC-beta family. In terms of assembly, part of the nascent polypeptide-associated complex (NAC), consisting of EGD2 and EGD1. NAC associates with ribosomes via EGD1.

It localises to the cytoplasm. Its subcellular location is the nucleus. In terms of biological role, component of the nascent polypeptide-associated complex (NAC), a dynamic component of the ribosomal exit tunnel, protecting the emerging polypeptides from interaction with other cytoplasmic proteins to ensure appropriate nascent protein targeting. The NAC complex also promotes mitochondrial protein import by enhancing productive ribosome interactions with the outer mitochondrial membrane and blocks the inappropriate interaction of ribosomes translating non-secretory nascent polypeptides with translocation sites in the membrane of the endoplasmic reticulum. EGD1 may act as a transcription factor that exert a negative effect on the expression of several genes that are transcribed by RNA polymerase II. The protein is Nascent polypeptide-associated complex subunit beta (EGD1) of Yarrowia lipolytica (strain CLIB 122 / E 150) (Yeast).